The chain runs to 451 residues: Ubiquinone biosynthesis monooxygenase COQ6, mitochondrial (451 aa).

It belongs to the UbiH/COQ6 family. As to quaternary structure, component of a multi-subunit COQ enzyme complex. FAD serves as cofactor.

The protein resides in the mitochondrion inner membrane. The catalysed reaction is a 4-hydroxy-3-(all-trans-polyprenyl)benzoate + 2 reduced [2Fe-2S]-[ferredoxin] + O2 + 2 H(+) = a 3,4-dihydroxy-5-(all-trans-polyprenyl)benzoate + 2 oxidized [2Fe-2S]-[ferredoxin] + H2O. It catalyses the reaction a 2-methoxy-6-(all-trans-polyprenyl)phenol + 2 reduced [2Fe-2S]-[ferredoxin] + O2 + 2 H(+) = a 2-methoxy-6-(all-trans-polyprenyl)benzene-1,4-diol + 2 oxidized [2Fe-2S]-[ferredoxin] + H2O. The protein operates within cofactor biosynthesis; ubiquinone biosynthesis. Functionally, FAD-dependent monooxygenase required for two non-consecutive steps during ubiquinone biosynthesis. Required for the C5-ring hydroxylation during ubiquinone biosynthesis by catalyzing the hydroxylation of 4-hydroxy-3-(all-trans-polyprenyl)benzoic acid to 3,4-dihydroxy-5-(all-trans-polyprenyl)benzoic acid. Also acts downstream of coq4, for the C1-hydroxylation during ubiquinone biosynthesis by catalyzing the hydroxylation of 2-methoxy-6-(all-trans-polyprenyl)phenol to 2-methoxy-6-(all-trans-polyprenyl)benzene-1,4-diol. The electrons required for the hydroxylation reaction are funneled indirectly to coq-6 from NADPH via a ferredoxin/ferredoxin reductase system. This chain is Ubiquinone biosynthesis monooxygenase COQ6, mitochondrial, found in Caenorhabditis elegans.